The following is a 603-amino-acid chain: Myotubularin (603 aa).

A compositionally biased stretch (polar residues) spans 1–13 (MASASTSKYNSHS). Positions 1–25 (MASASTSKYNSHSLENESIKRTSRD) are disordered. Residues Ser13 and Ser18 each carry the phosphoserine modification. Positions 14-25 (LENESIKRTSRD) are enriched in basic and acidic residues. Positions 29 to 97 (RDLTEAVPRL…GVISRIEKMG (69 aa)) constitute a GRAM domain. The Myotubularin phosphatase domain occupies 163 to 538 (GWTVYNPVEE…RHLELWVNYY (376 aa)). Asn288, Asn313, and Ile314 together coordinate a 1,2-diacyl-sn-glycero-3-phospho-(1D-myo-inositol-3,5-bisphosphate). The a 1,2-diacyl-sn-glycero-3-phospho-(1D-myo-inositol-3-phosphate) site is built by Asn288, Asn313, and Ile314. Residue Cys375 is the Phosphocysteine intermediate of the active site. Residues Ser376, Asp377, Gly378, Trp379, Asp380, Arg381, Lys417, and Arg421 each coordinate a 1,2-diacyl-sn-glycero-3-phospho-(1D-myo-inositol-3,5-bisphosphate). Residues Ser376, Asp377, Gly378, Trp379, Asp380, and Arg381 each coordinate a 1,2-diacyl-sn-glycero-3-phospho-(1D-myo-inositol-3-phosphate). Position 421 (Arg421) interacts with a 1,2-diacyl-sn-glycero-3-phospho-(1D-myo-inositol-3-phosphate). Thr495 carries the post-translational modification Phosphothreonine. A disordered region spans residues 579-603 (SAKLSDPPTSPSSPSQMMPHVQTHF). At Ser588 the chain carries Phosphoserine.

It belongs to the protein-tyrosine phosphatase family. Non-receptor class myotubularin subfamily. Heterodimer with MTMR12. Interacts with KMT2A/MLL1 (via SET domain). Interacts with DES in skeletal muscle but not in cardiac muscle. Interacts with SPEG.

The protein resides in the cytoplasm. The protein localises to the cell membrane. It localises to the cell projection. It is found in the filopodium. Its subcellular location is the ruffle. The protein resides in the late endosome. The protein localises to the myofibril. It localises to the sarcomere. It carries out the reaction a 1,2-diacyl-sn-glycero-3-phospho-(1D-myo-inositol-3-phosphate) + H2O = a 1,2-diacyl-sn-glycero-3-phospho-(1D-myo-inositol) + phosphate. It catalyses the reaction a 1,2-diacyl-sn-glycero-3-phospho-(1D-myo-inositol-3,5-bisphosphate) + H2O = a 1,2-diacyl-sn-glycero-3-phospho-(1D-myo-inositol-5-phosphate) + phosphate. The catalysed reaction is 1,2-dioctanoyl-sn-glycero-3-phospho-(1-D-myo-inositol-3-phosphate) + H2O = 1,2-dioctanoyl-sn-glycero-3-phospho-(1D-myo-inositol) + phosphate. The enzyme catalyses 1,2-dioctanoyl-sn-glycero-3-phospho-(1D-myo-inositol-3,5-bisphosphate) + H2O = 1,2-dioctanoyl-sn-glycero-3-phospho-(1D-myo-inositol-5-phosphate) + phosphate. It carries out the reaction 1,2-dihexadecanoyl-sn-glycero-3-phospho-(1D-myo-inositol-3,5-phosphate) + H2O = 1,2-dihexadecanoyl-sn-glycero-3-phospho-(1D-myo-inositol-5-phosphate) + phosphate. Its activity is regulated as follows. Allosterically activated by phosphatidylinositol 5-phosphate (PI5P). Lipid phosphatase which dephosphorylates phosphatidylinositol 3-monophosphate (PI3P) and phosphatidylinositol 3,5-bisphosphate (PI(3,5)P2). Has also been shown to dephosphorylate phosphotyrosine- and phosphoserine-containing peptides. Negatively regulates EGFR degradation through regulation of EGFR trafficking from the late endosome to the lysosome. Plays a role in vacuolar formation and morphology. Regulates desmin intermediate filament assembly and architecture. Plays a role in mitochondrial morphology and positioning. Required for skeletal muscle maintenance but not for myogenesis. In skeletal muscles, stabilizes MTMR12 protein levels. This is Myotubularin from Homo sapiens (Human).